The following is a 1292-amino-acid chain: HMG domain-containing protein 3 (1292 aa).

A DNA-binding region (HMG box) is located at residues 42-110 (TKKPRSAYLL…GLDPNSKLSA (69 aa)). Disordered regions lie at residues 363–391 (SKGSVVKRNQQPVTTEQNSSKENASKLTL), 448–505 (VQPE…GRAR), and 562–588 (KQLGQPIQQPSGPGEVKLPSGPSNRTS). Residues 370 to 391 (RNQQPVTTEQNSSKENASKLTL) show a composition bias toward polar residues. Residues 467–478 (PTPSEGTSTSSP) are compositionally biased toward low complexity. The span at 562 to 572 (KQLGQPIQQPS) shows a compositional bias: polar residues.

It localises to the nucleus. This chain is HMG domain-containing protein 3, found in Homo sapiens (Human).